A 479-amino-acid chain; its full sequence is Glutamate--tRNA ligase (479 aa).

The 'HIGH' region signature appears at 9 to 19 (PSPTGNLHIGT). The 'KMSKS' region motif lies at 243–247 (KLSKR). Residue lysine 246 participates in ATP binding.

This sequence belongs to the class-I aminoacyl-tRNA synthetase family. Glutamate--tRNA ligase type 1 subfamily. In terms of assembly, monomer.

The protein resides in the cytoplasm. The enzyme catalyses tRNA(Glu) + L-glutamate + ATP = L-glutamyl-tRNA(Glu) + AMP + diphosphate. Functionally, catalyzes the attachment of glutamate to tRNA(Glu) in a two-step reaction: glutamate is first activated by ATP to form Glu-AMP and then transferred to the acceptor end of tRNA(Glu). The sequence is that of Glutamate--tRNA ligase from Synechococcus sp. (strain JA-2-3B'a(2-13)) (Cyanobacteria bacterium Yellowstone B-Prime).